A 565-amino-acid chain; its full sequence is Ubiquitin carboxyl-terminal hydrolase 39 (565 aa).

Basic and acidic residues-rich tracts occupy residues 1–21 and 28–39; these read MSGR…ESES and VKRERDREREPE. 2 disordered regions span residues 1–61 and 75–96; these read MSGR…SARE and EREV…GRVD. At Ser46 the chain carries Phosphoserine. A Glycyl lysine isopeptide (Lys-Gly) (interchain with G-Cter in SUMO2) cross-link involves residue Lys51. Ser82 carries the phosphoserine modification. Basic and acidic residues predominate over residues 85-96; sequence EREVRAKNGRVD. A UBP-type; degenerate zinc finger spans residues 103–200; the sequence is RHCPYLDTIN…YVLKPTFTKQ (98 aa). Positions 136, 139, 155, and 161 each coordinate Zn(2+). Residues 225–555 form the USP domain; that stretch reads VGLNNIKAND…EAYIQIWKRR (331 aa).

Belongs to the peptidase C19 family. In terms of assembly, the U4/U6-U5 tri-snRNP complex is a building block of the precatalytic spliceosome (spliceosome B complex). Component of the U4/U6-U5 tri-snRNP complex composed of the U4, U6 and U5 snRNAs and at least PRPF3, PRPF4, PRPF6, PRPF8, PRPF31, SNRNP200, TXNL4A, SNRNP40, SNRPB, SNRPD1, SNRPD2, SNRPD3, SNRPE, SNRPF, SNRPG, DDX23, CD2BP2, PPIH, SNU13, EFTUD2, SART1 and USP39, plus LSM2, LSM3, LSM4, LSM5, LSM6, LSM7 and LSM8.

It is found in the nucleus. The catalysed reaction is Thiol-dependent hydrolysis of ester, thioester, amide, peptide and isopeptide bonds formed by the C-terminal Gly of ubiquitin (a 76-residue protein attached to proteins as an intracellular targeting signal).. In terms of biological role, deubiquitinating enzyme that plays a role in many cellular processes including cellular antiviral response, epithelial morphogenesis, DNA repair or B-cell development. Plays a role in pre-mRNA splicing as a component of the U4/U6-U5 tri-snRNP, one of the building blocks of the precatalytic spliceosome. Specifically regulates immunoglobulin gene rearrangement in a spliceosome-dependent manner, which involves modulating chromatin interactions at the Igh locus and therefore plays an essential role in B-cell development. Regulates AURKB mRNA levels, and thereby plays a role in cytokinesis and in the spindle checkpoint. Regulates apoptosis and G2/M cell cycle checkpoint in response to DNA damage by deubiquitinating and stabilizing CHK2. Also plays an important role in DNA repair by controlling the recruitment of XRCC4/LIG4 to DNA double-strand breaks for non-homologous end-joining repair. Participates in antiviral activity by affecting the type I IFN signaling by stabilizing STAT1 and decreasing its 'Lys-6'-linked ubiquitination. Contributes to non-canonical Wnt signaling during epidermal differentiation. Acts as a negative regulator NF-kappa-B activation through deubiquitination of 'Lys-48'-linked ubiquitination of NFKBIA. The sequence is that of Ubiquitin carboxyl-terminal hydrolase 39 (USP39) from Pongo abelii (Sumatran orangutan).